A 218-amino-acid chain; its full sequence is Small ribosomal subunit protein uS3 (218 aa).

Positions 38-106 (IREYINKRLQ…REHINIVEIK (69 aa)) constitute a KH type-2 domain.

It belongs to the universal ribosomal protein uS3 family. In terms of assembly, part of the 30S ribosomal subunit. Forms a tight complex with proteins S10 and S14.

Binds the lower part of the 30S subunit head. Binds mRNA in the 70S ribosome, positioning it for translation. The protein is Small ribosomal subunit protein uS3 of Geobacillus stearothermophilus (Bacillus stearothermophilus).